The sequence spans 447 residues: UPF0210 protein LEUM_1180 (447 aa).

It belongs to the UPF0210 family. As to quaternary structure, homodimer.

This Leuconostoc mesenteroides subsp. mesenteroides (strain ATCC 8293 / DSM 20343 / BCRC 11652 / CCM 1803 / JCM 6124 / NCDO 523 / NBRC 100496 / NCIMB 8023 / NCTC 12954 / NRRL B-1118 / 37Y) protein is UPF0210 protein LEUM_1180.